A 700-amino-acid polypeptide reads, in one-letter code: Calpain-2 catalytic subunit (700 aa).

Residues 2-19 constitute a propeptide, anchors to the small subunit; sequence AGMAAALAKERAAAAGAG. A Calpain catalytic domain is found at 45-344; that stretch reads LFHDPSFPAG…YSRLEICNLT (300 aa). Ca(2+) contacts are provided by glycine 91 and aspartate 96. Cysteine 105 is an active-site residue. Glutamate 175, glutamine 229, and lysine 230 together coordinate Ca(2+). Catalysis depends on residues histidine 262 and asparagine 286. Glutamate 292, aspartate 299, and glutamate 323 together coordinate Ca(2+). The tract at residues 345–514 is domain III; the sequence is PDTLASDRYK…KNANSTVIDD (170 aa). Residues 515–529 are linker; it reads EIEANFEETEIDEDD. The tract at residues 530 to 700 is domain IV; sequence IEPSFKKLFG…LINWLFFTVI (171 aa). Alanine 542, aspartate 545, glutamate 547, glutamate 552, aspartate 585, aspartate 587, serine 589, lysine 591, glutamate 596, aspartate 615, aspartate 617, serine 619, threonine 621, glutamate 626, aspartate 658, and asparagine 661 together coordinate Ca(2+). 2 consecutive EF-hand domains span residues 572–605 and 602–637; these read FSIE…TKIQ and TKIQ…AGFK. In terms of domain architecture, EF-hand 3 spans 667–700; the sequence is IRLETLYKMFRKLDTEKTGTIELNLINWLFFTVI.

The protein belongs to the peptidase C2 family. As to quaternary structure, forms a heterodimer with a small (regulatory) subunit (CAPNS1). Ca(2+) serves as cofactor. As to expression, ubiquitous.

The protein resides in the cytoplasm. The protein localises to the cell membrane. It carries out the reaction Broad endopeptidase specificity.. Its activity is regulated as follows. Activated by 200-1000 micromolar concentrations of calcium and inhibited by calpastatin. In terms of biological role, calcium-regulated non-lysosomal thiol-protease which catalyze limited proteolysis of substrates involved in cytoskeletal remodeling and signal transduction. In Gallus gallus (Chicken), this protein is Calpain-2 catalytic subunit (CAPN2).